A 380-amino-acid chain; its full sequence is tRNA-specific 2-thiouridylase MnmA (380 aa).

Residues 26 to 33 and L52 each bind ATP; that span reads AMSGGVDS. The Nucleophile role is filled by C120. An intrachain disulfide couples C120 to C217. G144 is a binding site for ATP. The segment at 166-168 is interaction with tRNA; sequence RDQ. C217 serves as the catalytic Cysteine persulfide intermediate.

Belongs to the MnmA/TRMU family.

Its subcellular location is the cytoplasm. The enzyme catalyses S-sulfanyl-L-cysteinyl-[protein] + uridine(34) in tRNA + AH2 + ATP = 2-thiouridine(34) in tRNA + L-cysteinyl-[protein] + A + AMP + diphosphate + H(+). Functionally, catalyzes the 2-thiolation of uridine at the wobble position (U34) of tRNA, leading to the formation of s(2)U34. This Roseobacter denitrificans (strain ATCC 33942 / OCh 114) (Erythrobacter sp. (strain OCh 114)) protein is tRNA-specific 2-thiouridylase MnmA.